The following is a 274-amino-acid chain: Cytochrome b-c1 complex subunit Rieske, mitochondrial (274 aa).

At 79–103 the chain is on the mitochondrial matrix side; sequence SHTDIKVPDFSDYRRPEVLDSTKSS. A helical transmembrane segment spans residues 104–140; sequence KESSEARKGFSYLVTATTTVGVAYAAKNVVSQFVSSM. Residues 141 to 274 are Mitochondrial intermembrane-facing; the sequence is SASADVLAMS…FTSDDMVIVG (134 aa). Residues 187-272 enclose the Rieske domain; sequence EAAVEVSQLR…YEFTSDDMVI (86 aa). Residues Cys217, His219, Cys236, His239, and Ser241 each contribute to the [2Fe-2S] cluster site. Cys222 and Cys238 are joined by a disulfide.

It belongs to the Rieske iron-sulfur protein family. In terms of assembly, component of the ubiquinol-cytochrome c oxidoreductase (cytochrome b-c1 complex, complex III, CIII), a multisubunit enzyme composed of 11 subunits. The complex is composed of 3 respiratory subunits cytochrome b, cytochrome c1 and Rieske protein UQCRFS1, 2 core protein subunits UQCRC1/QCR1 and UQCRC2/QCR2, and 6 low-molecular weight protein subunits UQCRH/QCR6, UQCRB/QCR7, UQCRQ/QCR8, UQCR10/QCR9, UQCR11/QCR10 and subunit 9, the cleavage product of Rieske protein UQCRFS1. The complex exists as an obligatory dimer and forms supercomplexes (SCs) in the inner mitochondrial membrane with NADH-ubiquinone oxidoreductase (complex I, CI) and cytochrome c oxidase (complex IV, CIV), resulting in different assemblies (supercomplex SCI(1)III(2)IV(1) and megacomplex MCI(2)III(2)IV(2)). Incorporation of the Rieske protein UQCRFS1 is the penultimate step in complex III assembly. Interacts with TTC19, which is involved in the clearance of UQCRFS1 fragments. Component of the ubiquinol-cytochrome c oxidoreductase (cytochrome b-c1 complex, complex III, CIII). Subunit 9 corresponds to the mitochondrial targeting sequence (MTS) of Rieske protein UQCRFS1. It is retained after processing and incorporated inside complex III, where it remains bound to the complex and localizes between the 2 core subunits UQCRC1/QCR1 and UQCRC2/QCR2. [2Fe-2S] cluster serves as cofactor. Post-translationally, proteolytic processing is necessary for the correct insertion of UQCRFS1 in the complex III dimer. Several fragments are generated during UQCRFS1 insertion, most probably due to the endogenous matrix-processing peptidase (MPP) activity of the 2 core protein subunits UQCRC1/QCR1 and UQCRC2/QCR2, which are homologous to the 2 mitochondrial-processing peptidase (MPP) subunits beta-MPP and alpha-MPP respectively. The action of the protease is also necessary for the clearance of the UQCRFS1 fragments.

Its subcellular location is the mitochondrion inner membrane. The catalysed reaction is a quinol + 2 Fe(III)-[cytochrome c](out) = a quinone + 2 Fe(II)-[cytochrome c](out) + 2 H(+)(out). Component of the ubiquinol-cytochrome c oxidoreductase, a multisubunit transmembrane complex that is part of the mitochondrial electron transport chain which drives oxidative phosphorylation. The respiratory chain contains 3 multisubunit complexes succinate dehydrogenase (complex II, CII), ubiquinol-cytochrome c oxidoreductase (cytochrome b-c1 complex, complex III, CIII) and cytochrome c oxidase (complex IV, CIV), that cooperate to transfer electrons derived from NADH and succinate to molecular oxygen, creating an electrochemical gradient over the inner membrane that drives transmembrane transport and the ATP synthase. The cytochrome b-c1 complex catalyzes electron transfer from ubiquinol to cytochrome c, linking this redox reaction to translocation of protons across the mitochondrial inner membrane, with protons being carried across the membrane as hydrogens on the quinol. In the process called Q cycle, 2 protons are consumed from the matrix, 4 protons are released into the intermembrane space and 2 electrons are passed to cytochrome c. The Rieske protein is a catalytic core subunit containing a [2Fe-2S] iron-sulfur cluster. It cycles between 2 conformational states during catalysis to transfer electrons from the quinol bound in the Q(0) site in cytochrome b to cytochrome c1. Incorporation of UQCRFS1 is the penultimate step in complex III assembly. Functionally, component of the ubiquinol-cytochrome c oxidoreductase (cytochrome b-c1 complex, complex III, CIII). UQCRFS1 undergoes proteolytic processing once it is incorporated in the complex III dimer. One of the fragments, called subunit 9, corresponds to its mitochondrial targeting sequence (MTS). The proteolytic processing is necessary for the correct insertion of UQCRFS1 in the complex III dimer, but the persistence of UQCRFS1-derived fragments may prevent newly imported UQCRFS1 to be processed and assembled into complex III and is detrimental for the complex III structure and function. This Bos taurus (Bovine) protein is Cytochrome b-c1 complex subunit Rieske, mitochondrial (UQCRFS1).